Reading from the N-terminus, the 907-residue chain is Protein translocase subunit SecA (907 aa).

ATP contacts are provided by residues glutamine 87, 105–109, and aspartate 511; that span reads GEGKT. Cysteine 891, cysteine 893, cysteine 902, and histidine 903 together coordinate Zn(2+).

It belongs to the SecA family. Monomer and homodimer. Part of the essential Sec protein translocation apparatus which comprises SecA, SecYEG and auxiliary proteins SecDF-YajC and YidC. The cofactor is Zn(2+).

Its subcellular location is the cell inner membrane. The protein resides in the cytoplasm. It carries out the reaction ATP + H2O + cellular proteinSide 1 = ADP + phosphate + cellular proteinSide 2.. Part of the Sec protein translocase complex. Interacts with the SecYEG preprotein conducting channel. Has a central role in coupling the hydrolysis of ATP to the transfer of proteins into and across the cell membrane, serving both as a receptor for the preprotein-SecB complex and as an ATP-driven molecular motor driving the stepwise translocation of polypeptide chains across the membrane. This is Protein translocase subunit SecA from Aromatoleum aromaticum (strain DSM 19018 / LMG 30748 / EbN1) (Azoarcus sp. (strain EbN1)).